The primary structure comprises 188 residues: MNWHMIISGLIVVVLKVVGMTLFLLYFPQIFNKSNDGFTTTRSYGTVSQIFGSSSPSPNGFITTRSYGTVCPKDWEFYQARCFFLSTSESSWNESRDFCKGKGSTLAIVNTPEKLKFLQDITDAEKYFIGLIYHREEKRWRWINNSVFNGNVTNQNQNFNCATIGLTKTFDAASCDISYRRICEKNAK.

Residues 1–4 (MNWH) are Cytoplasmic-facing. A helical; Signal-anchor for type II membrane protein transmembrane segment spans residues 5 to 27 (MIISGLIVVVLKVVGMTLFLLYF). The Extracellular segment spans residues 28 to 188 (PQIFNKSNDG…YRRICEKNAK (161 aa)). N32 carries N-linked (GlcNAc...) asparagine glycosylation. Residues C71 and C82 are joined by a disulfide bond. Positions 78–184 (YQARCFFLST…CDISYRRICE (107 aa)) constitute a C-type lectin domain. N-linked (GlcNAc...) asparagine glycans are attached at residues N93, N144, and N151. 2 disulfide bridges follow: C99–C183 and C161–C175.

Monomer. Homodimer. The majority of CLEC5A is expressed as a monomeric form on macrophages. Interacts with TYROBP/DAP12. The interaction with TYROBP is required for CLEC5A cell surface expression. Interacts with HCST/DAP10. Forms a CLEC5A/TYROBP/HCST trimolecular complex depending almost solely on TYROBP. As to quaternary structure, (Microbial infection) Interacts with dengue virus envelope protein E. N-glycosylated. Contains sialic acid residues. As to expression, highly expressed in bone marrow with lower levels in synovium, lung and bronchus. Expressed in peripheral blood monocytes and in the monocyte/macrophage cell lines U-937 and Mono-Mac-6, but not in cell lines of other origins. Expression is down-regulated when monocytes differentiate into dendritic cells.

The protein localises to the cell membrane. Functions as a positive regulator of osteoclastogenesis. Cell surface receptor that signals via TYROBP. Regulates inflammatory responses. Its function is as follows. (Microbial infection) Critical macrophage receptor for dengue virus serotypes 1-4. The binding of dengue virus to CLEC5A triggers signaling through the phosphorylation of TYROBP. This interaction does not result in viral entry, but stimulates pro-inflammatory cytokine release. The sequence is that of C-type lectin domain family 5 member A (CLEC5A) from Homo sapiens (Human).